Consider the following 515-residue polypeptide: Glycosyltransferase family 92 protein F59C6.8 (515 aa).

Residues 18–38 (LFIFIAVCLGFLIAVTILAGL) traverse the membrane as a helical segment. A GT92 domain is found at 163-456 (RKVVACFSPL…IEVCYNRIFY (294 aa)).

The protein belongs to the glycosyltransferase 92 family.

The protein localises to the membrane. This chain is Glycosyltransferase family 92 protein F59C6.8, found in Caenorhabditis elegans.